The following is a 348-amino-acid chain: NADH-ubiquinone oxidoreductase chain 2 (348 aa).

Transmembrane regions (helical) follow at residues 3–23 (PYVLMILLSSLGLGTTLTFAS), 60–80 (FLTQATAAAMILFASTTNAWM), 96–116 (TMFMTALALKIGLAPMHFWMP), 149–169 (IDPLLLTLLGVTSTLVGGWGG), 178–197 (ILAYSSIAHMGWMIIVIQYA), 202–219 (LLALGTYIIMTSAAFLTL), 246–266 (LVLLSLGGLPPLTGFMPKWLI), 274–294 (DLPIIATTMALAALISLYFYL), and 326–346 (LALFTMATLGLLPMTPAILTL).

It belongs to the complex I subunit 2 family.

It localises to the mitochondrion inner membrane. It carries out the reaction a ubiquinone + NADH + 5 H(+)(in) = a ubiquinol + NAD(+) + 4 H(+)(out). Core subunit of the mitochondrial membrane respiratory chain NADH dehydrogenase (Complex I) that is believed to belong to the minimal assembly required for catalysis. Complex I functions in the transfer of electrons from NADH to the respiratory chain. The immediate electron acceptor for the enzyme is believed to be ubiquinone. The sequence is that of NADH-ubiquinone oxidoreductase chain 2 (MT-ND2) from Carassius auratus (Goldfish).